The sequence spans 274 residues: MATITAADVNKLRTITGAGMMDCKKALVESDGDFDLAIENLRKKGQKVAANRSDRESTEGAAIAVVNADNTVGVVITLNCETDFVGMNENFVKMAVEMANLALNFNNKEEFLASDFNGITIADKLIEQTGVIGEKLEIRTFEKLEGAFVGSYIHSGNKIATLTAFSAKADGIEEAARNVAMQAAAMNPIALNEEGVDADTIAKEIEIAKDMLRAEGKPEAMIENIAKGKLGRFFKDNTLVNQDYIKDSSMSVANYVKSIDANLIVTGFKRAALG.

The segment at 82 to 85 (TDFV) is involved in Mg(2+) ion dislocation from EF-Tu.

The protein belongs to the EF-Ts family.

The protein resides in the cytoplasm. Functionally, associates with the EF-Tu.GDP complex and induces the exchange of GDP to GTP. It remains bound to the aminoacyl-tRNA.EF-Tu.GTP complex up to the GTP hydrolysis stage on the ribosome. This is Elongation factor Ts from Flavobacterium psychrophilum (strain ATCC 49511 / DSM 21280 / CIP 103535 / JIP02/86).